The primary structure comprises 208 residues: Interleukin-6 (208 aa).

Residues 1–29 (MNSRFTSAFTPFAVSLGLLLVMTSAFPTP) form the signal peptide. An N-linked (GlcNAc...) asparagine glycan is attached at Asn-38. A disulfide bond links Cys-72 and Cys-78. Ser-81 carries the post-translational modification Phosphoserine. A disulfide bridge connects residues Cys-101 and Cys-111.

It belongs to the IL-6 superfamily. As to quaternary structure, component of a hexamer of two molecules each of IL6, IL6R and IL6ST; first binds to IL6R to associate with the signaling subunit IL6ST. Interacts with IL6R (via the N-terminal ectodomain); this interaction may be affected by IL6R-binding with SORL1, hence decreasing IL6 cis signaling. Interacts with SORL1 (via the N-terminal ectodomain); this interaction leads to IL6 internalization and lysosomal degradation. May form a trimeric complex with the soluble SORL1 ectodomain and soluble IL6R receptor; this interaction might stabilize circulating IL6, hence promoting IL6 trans signaling.

It is found in the secreted. Its function is as follows. Cytokine with a wide variety of biological functions in immunity, tissue regeneration, and metabolism. Binds to IL6R, then the complex associates to the signaling subunit IL6ST/gp130 to trigger the intracellular IL6-signaling pathway. The interaction with the membrane-bound IL6R and IL6ST stimulates 'classic signaling', whereas the binding of IL6 and soluble IL6R to IL6ST stimulates 'trans-signaling'. Alternatively, 'cluster signaling' occurs when membrane-bound IL6:IL6R complexes on transmitter cells activate IL6ST receptors on neighboring receiver cells. In terms of biological role, IL6 is a potent inducer of the acute phase response. Rapid production of IL6 contributes to host defense during infection and tissue injury, but excessive IL6 synthesis is involved in disease pathology. In the innate immune response, is synthesized by myeloid cells, such as macrophages and dendritic cells, upon recognition of pathogens through toll-like receptors (TLRs) at the site of infection or tissue injury. In the adaptive immune response, is required for the differentiation of B cells into immunoglobulin-secreting cells. Plays a major role in the differentiation of CD4(+) T cell subsets. Essential factor for the development of T follicular helper (Tfh) cells that are required for the induction of germinal-center formation. Required to drive naive CD4(+) T cells to the Th17 lineage. Also required for proliferation of myeloma cells and the survival of plasmablast cells. Functionally, acts as an essential factor in bone homeostasis and on vessels directly or indirectly by induction of VEGF, resulting in increased angiogenesis activity and vascular permeability. Induces, through 'trans-signaling' and synergistically with IL1B and TNF, the production of VEGF. Involved in metabolic controls, is discharged into the bloodstream after muscle contraction increasing lipolysis and improving insulin resistance. 'Trans-signaling' in central nervous system also regulates energy and glucose homeostasis. Mediates, through GLP-1, crosstalk between insulin-sensitive tissues, intestinal L cells and pancreatic islets to adapt to changes in insulin demand. Also acts as a myokine. Plays a protective role during liver injury, being required for maintenance of tissue regeneration. Also has a pivotal role in iron metabolism by regulating HAMP/hepcidin expression upon inflammation or bacterial infection. Through activation of IL6ST-YAP-NOTCH pathway, induces inflammation-induced epithelial regeneration. This Bos taurus (Bovine) protein is Interleukin-6 (IL6).